The sequence spans 131 residues: Profilin-1 (131 aa).

Belongs to the profilin family. Occurs in many kinds of cells as a complex with monomeric actin in a 1:1 ratio.

It is found in the cytoplasm. Its subcellular location is the cytoskeleton. Functionally, binds to actin and affects the structure of the cytoskeleton. At high concentrations, profilin prevents the polymerization of actin, whereas it enhances it at low concentrations. By binding to PIP2, it inhibits the formation of IP3 and DG. The chain is Profilin-1 from Malus domestica (Apple).